Here is a 103-residue protein sequence, read N- to C-terminus: ATP synthase subunit c (103 aa).

3 consecutive transmembrane segments (helical) span residues Phe3 to Leu23, Ser30 to Gly50, and Met74 to Ile94.

This sequence belongs to the ATPase C chain family. As to quaternary structure, F-type ATPases have 2 components, F(1) - the catalytic core - and F(0) - the membrane proton channel. F(1) has five subunits: alpha(3), beta(3), gamma(1), delta(1), epsilon(1). F(0) has three main subunits: a(1), b(2) and c(10-14). The alpha and beta chains form an alternating ring which encloses part of the gamma chain. F(1) is attached to F(0) by a central stalk formed by the gamma and epsilon chains, while a peripheral stalk is formed by the delta and b chains.

Its subcellular location is the cell inner membrane. Its function is as follows. F(1)F(0) ATP synthase produces ATP from ADP in the presence of a proton or sodium gradient. F-type ATPases consist of two structural domains, F(1) containing the extramembraneous catalytic core and F(0) containing the membrane proton channel, linked together by a central stalk and a peripheral stalk. During catalysis, ATP synthesis in the catalytic domain of F(1) is coupled via a rotary mechanism of the central stalk subunits to proton translocation. In terms of biological role, key component of the F(0) channel; it plays a direct role in translocation across the membrane. A homomeric c-ring of between 10-14 subunits forms the central stalk rotor element with the F(1) delta and epsilon subunits. This is ATP synthase subunit c from Helicobacter hepaticus (strain ATCC 51449 / 3B1).